Consider the following 560-residue polypeptide: Vesicular glutamate transporter 1 (560 aa).

At 1 to 63 the chain is on the cytoplasmic side; it reads MEFRQEEFRK…CTCFGLPRRY (63 aa). The chain crosses the membrane as a helical span at residues 64–84; that stretch reads IIAIMSGLGFCISFGIRCNLG. The Extracellular segment spans residues 85–116; the sequence is VAIVSMVNNSTTHRGGHVVMQKAQFNWDPETV. The chain crosses the membrane as a helical span at residues 117 to 137; sequence GLIHGSFFWGYIVTQIPGGFI. Residues 138–140 lie on the Cytoplasmic side of the membrane; the sequence is CQK. Residues 141 to 161 form a helical membrane-spanning segment; the sequence is FAANRVFGFAIVATSTLNMLI. Residues 162–169 lie on the Extracellular side of the membrane; it reads PSAARVHY. The chain crosses the membrane as a helical span at residues 170–190; the sequence is GCVIFVRILQGLVEGVTYPAC. At 191–208 the chain is on the cytoplasmic side; that stretch reads HGIWSKWAPPLERSRLAT. A helical transmembrane segment spans residues 209-229; the sequence is TAFCGSYAGAVVAMPLAGVLV. The Extracellular portion of the chain corresponds to 230 to 236; the sequence is QYSGWSS. Residues 237 to 257 traverse the membrane as a helical segment; that stretch reads VFYVYGSFGIFWYLFWLLVSY. Residues 258–302 lie on the Cytoplasmic side of the membrane; sequence ESPALHPSISEEERKYIEDAIGESAKLMNPVTKFNTPWRRFFTSM. Residues 303 to 323 traverse the membrane as a helical segment; that stretch reads PVYAIIVANFCRSWTFYLLLI. Topologically, residues 324–341 are extracellular; the sequence is SQPAYFEEVFGFEISKVG. A helical membrane pass occupies residues 342–362; the sequence is LVSALPHLVMTIIVPIGGQIA. The Cytoplasmic segment spans residues 363–378; it reads DFLRSRRIMSTTNVRK. A helical transmembrane segment spans residues 379 to 399; that stretch reads LMNCGGFGMEATLLLVVGYSH. Residues 400 to 401 are Extracellular-facing; that stretch reads SK. Residues 402-422 form a helical membrane-spanning segment; sequence GVAISFLVLAVGFSGFAISGF. Topologically, residues 423–435 are cytoplasmic; that stretch reads NVNHLDIAPRYAS. The helical transmembrane segment at 436 to 456 threads the bilayer; the sequence is ILMGISNGVGTLSGMVCPIIV. Residues 457–469 lie on the Extracellular side of the membrane; it reads GAMTKHKTREEWQ. Residues 470 to 490 form a helical membrane-spanning segment; the sequence is YVFLIASLVHYGGVIFYGVFA. The Cytoplasmic portion of the chain corresponds to 491–560; sequence SGEKQPWAEP…PRPPPPVRDY (70 aa). Residues 497-560 form a disordered region; it reads WAEPEEMSEE…PRPPPPVRDY (64 aa). The residue at position 504 (serine 504) is a Phosphoserine. Residues 520-529 show a composition bias toward acidic residues; it reads DESEMEDEAE. Pro residues-rich tracts occupy residues 531–540 and 550–560; these read PGAPPAPPPS and PPRPPPPVRDY.

Belongs to the major facilitator superfamily. Sodium/anion cotransporter family. VGLUT subfamily. In terms of assembly, interacts with SHANK3.

Its subcellular location is the cytoplasmic vesicle. It localises to the secretory vesicle. The protein localises to the synaptic vesicle membrane. The protein resides in the cell membrane. It is found in the synapse. Its subcellular location is the synaptosome. The enzyme catalyses L-glutamate(out) = L-glutamate(in). It catalyses the reaction chloride(in) = chloride(out). The catalysed reaction is 3 Na(+)(out) + phosphate(out) = 3 Na(+)(in) + phosphate(in). It carries out the reaction phosphate(in) = phosphate(out). The enzyme catalyses K(+)(in) + H(+)(out) = K(+)(out) + H(+)(in). Chloride channel activity is allosterically activated by lumenal H(+) and Cl(-) leading to synaptic vesicles acidification. The L-glutamate transport activity is allosterically activated by lumenal H(+) and Cl(-). The allosteric activation by H(+) efficiently prevents non-vesicular efflux across the plasma membrane, thereby restricting L-glutamate transport activity to acidic membranes such as synaptic vesicles. Multifunctional transporter that transports L-glutamate as well as multiple ions such as chloride, proton, potassium, sodium and phosphate. At the synaptic vesicle membrane, mainly functions as an uniporter which transports preferentially L-glutamate but also phosphate from the cytoplasm into synaptic vesicles at presynaptic nerve terminals of excitatory neural cells. The L-glutamate or phosphate uniporter activity is electrogenic and is driven by the proton electrochemical gradient, mainly by the electrical gradient established by the vacuolar H(+)-ATPase across the synaptic vesicle membrane. In addition, functions as a chloride channel that allows a chloride permeation through the synaptic vesicle membrane that affects the proton electrochemical gradient and promotes synaptic vesicles acidification. Moreover, may function as a K(+)/H(+) antiport allowing to maintain the electrical gradient and to decrease chemical gradient and therefore sustain vesicular glutamate uptake. The vesicular K(+)/H(+) antiport activity is electroneutral. At the plasma membrane, following exocytosis, functions as a symporter of Na(+) and phosphate from the extracellular space to the cytoplasm allowing synaptic phosphate homeostasis regulation. The symporter activity is driven by an inside negative membrane potential and is electrogenic. Is necessary for synaptic signaling of visual-evoked responses from photoreceptors. The chain is Vesicular glutamate transporter 1 from Bos taurus (Bovine).